Consider the following 758-residue polypeptide: Thiosulfate reductase molybdopterin-containing subunit PhsA (758 aa).

Positions 1–30 form a signal peptide, tat-type signal; that stretch reads MSISRRSFLQGVGIGCSACALGAFPPGALA. The 4Fe-4S Mo/W bis-MGD-type domain maps to 41–97; sequence TTLTPSLCEMCSFRCPIQAQVVNNKTVFIQGNPSAPQQGTRICARGGSGVSLVNDPQ. [4Fe-4S] cluster contacts are provided by Cys48, Cys51, Cys55, and Cys83.

This sequence belongs to the prokaryotic molybdopterin-containing oxidoreductase family. As to quaternary structure, composed of three subunits: PhsA, PhsB and PhsC. The cofactor is [4Fe-4S] cluster. Requires Mo-bis(molybdopterin guanine dinucleotide) as cofactor. Predicted to be exported by the Tat system. The position of the signal peptide cleavage has not been experimentally proven.

The protein resides in the periplasm. The catalysed reaction is a quinone + hydrogen sulfide + sulfite + 2 H(+) = thiosulfate + a quinol. Functionally, component of the PhsABC thiosulfate reductase that catalyzes the reduction of thiosulfate to sulfite and hydrogen sulfide, with menaquinol as the sole electron donor. Proton motive force (PMF) is required to drive transmembrane electron transfer within the reductase. The PhsA subunit contains the active site molybdenum-bis(molybdopterin guanine dinucleotide) (Mo-bis-MGD) cofactor. This Salmonella typhimurium (strain LT2 / SGSC1412 / ATCC 700720) protein is Thiosulfate reductase molybdopterin-containing subunit PhsA.